The primary structure comprises 122 residues: Large ribosomal subunit protein uL14 (122 aa).

This sequence belongs to the universal ribosomal protein uL14 family. As to quaternary structure, part of the 50S ribosomal subunit. Forms a cluster with proteins L3 and L19. In the 70S ribosome, L14 and L19 interact and together make contacts with the 16S rRNA in bridges B5 and B8.

Its function is as follows. Binds to 23S rRNA. Forms part of two intersubunit bridges in the 70S ribosome. The polypeptide is Large ribosomal subunit protein uL14 (Bordetella avium (strain 197N)).